The sequence spans 195 residues: Small ribosomal subunit protein uS4c (195 aa).

Residues methionine 82–asparagine 143 enclose the S4 RNA-binding domain.

Belongs to the universal ribosomal protein uS4 family. Part of the 30S ribosomal subunit. Contacts protein S5. The interaction surface between S4 and S5 is involved in control of translational fidelity.

The protein localises to the plastid. The protein resides in the chloroplast. Functionally, one of the primary rRNA binding proteins, it binds directly to 16S rRNA where it nucleates assembly of the body of the 30S subunit. Its function is as follows. With S5 and S12 plays an important role in translational accuracy. This chain is Small ribosomal subunit protein uS4c (rps4), found in Gladiolus murielae (Abyssinian gladiolus).